The sequence spans 275 residues: Dihydropteroate synthase (275 aa).

In terms of domain architecture, Pterin-binding spans 15–267 (PQIMGILNFT…DVAATSDMLK (253 aa)). Asn-22 provides a ligand contact to Mg(2+). Residues Thr-62, Asp-96, Asn-115, Asp-185, Lys-221, and 255 to 257 (RVH) each bind (7,8-dihydropterin-6-yl)methyl diphosphate.

It belongs to the DHPS family. As to quaternary structure, homodimer. The cofactor is Mg(2+).

The enzyme catalyses (7,8-dihydropterin-6-yl)methyl diphosphate + 4-aminobenzoate = 7,8-dihydropteroate + diphosphate. Its pathway is cofactor biosynthesis; tetrahydrofolate biosynthesis; 7,8-dihydrofolate from 2-amino-4-hydroxy-6-hydroxymethyl-7,8-dihydropteridine diphosphate and 4-aminobenzoate: step 1/2. In terms of biological role, catalyzes the condensation of para-aminobenzoate (pABA) with 6-hydroxymethyl-7,8-dihydropterin diphosphate (DHPt-PP) to form 7,8-dihydropteroate (H2Pte), the immediate precursor of folate derivatives. This is Dihydropteroate synthase (folP-A) from Haemophilus influenzae (strain ATCC 51907 / DSM 11121 / KW20 / Rd).